Reading from the N-terminus, the 102-residue chain is Small ribosomal subunit protein uS10 (102 aa).

Belongs to the universal ribosomal protein uS10 family. In terms of assembly, part of the 30S ribosomal subunit.

Its function is as follows. Involved in the binding of tRNA to the ribosomes. This is Small ribosomal subunit protein uS10 from Halalkalibacterium halodurans (strain ATCC BAA-125 / DSM 18197 / FERM 7344 / JCM 9153 / C-125) (Bacillus halodurans).